The following is a 440-amino-acid chain: COP9 signalosome complex subunit 5 (440 aa).

The MPN domain maps to 71–218; sequence VLISKLSCEK…MGAFRTIESK (148 aa). Zn(2+) is bound by residues H164, H166, and D177. Positions 164–177 match the JAMM motif motif; the sequence is HSHPGYDCWLSNID. Polar residues predominate over residues 319–341; sequence TQRGDSTETSSFGSMFSGDNTSD. Disordered regions lie at residues 319–343 and 376–400; these read TQRG…SDVD and SRST…HDEG.

The protein belongs to the peptidase M67A family. CSN5 subfamily. As to quaternary structure, component of a COP9 signalosome-like (CSN) complex, composed of at least RRI1/CSN5, CSN9, RRI2/CSN10, PCI8/CSN11, CSN12 and CSI1. Within this complex it probably interacts directly with CSN12. Also interacts with RPN5. The cofactor is a divalent metal cation.

The protein localises to the cytoplasm. It localises to the nucleus. Catalytic component of the COP9 signalosome (CSN) complex that acts as an regulator of the ubiquitin (Ubl) conjugation pathway by mediating the deneddylation of the cullin subunit of SCF-type E3 ubiquitin-protein ligase complexes. The CSN complex is involved in the regulation of the mating pheromone response. The protein is COP9 signalosome complex subunit 5 (RRI1) of Saccharomyces cerevisiae (strain YJM789) (Baker's yeast).